A 337-amino-acid polypeptide reads, in one-letter code: Ribosomal RNA small subunit methyltransferase H (337 aa).

S-adenosyl-L-methionine contacts are provided by residues 45–47 (GGH), Asp-64, Phe-91, Asp-120, and Gln-127.

This sequence belongs to the methyltransferase superfamily. RsmH family.

The protein localises to the cytoplasm. It carries out the reaction cytidine(1402) in 16S rRNA + S-adenosyl-L-methionine = N(4)-methylcytidine(1402) in 16S rRNA + S-adenosyl-L-homocysteine + H(+). Its function is as follows. Specifically methylates the N4 position of cytidine in position 1402 (C1402) of 16S rRNA. This Corynebacterium glutamicum (strain R) protein is Ribosomal RNA small subunit methyltransferase H.